The following is a 531-amino-acid chain: Plant UBX domain-containing protein 11 (531 aa).

Position 1 is an N-acetylmethionine (M1). Over residues 160–173 the composition is skewed to low complexity; the sequence is AVASPSTASSVQPS. Disordered regions lie at residues 160–316 and 441–531; these read AVAS…KASD and ANAS…NDRR. 2 stretches are compositionally biased toward polar residues: residues 174–190 and 201–214; these read ETKSTVTSASTTENNDG and EPSNLCDTTKNQPA. A compositionally biased stretch (basic and acidic residues) spans 290–301; it reads VDTKETMKPKDE. The region spanning 312-390 is the UBX domain; the sequence is KKASDVHLNI…RLFDRQALVV (79 aa). Composition is skewed to polar residues over residues 441–478 and 486–496; these read ANASSSVPERQTRPNTEVRNNLGQVGTSFQDPSEGRSN and TSRIGSNIHTL.

As to quaternary structure, interacts with CDC48A.

The polypeptide is Plant UBX domain-containing protein 11 (Arabidopsis thaliana (Mouse-ear cress)).